An 861-amino-acid chain; its full sequence is Bifunctional uridylyltransferase/uridylyl-removing enzyme (861 aa).

The tract at residues 1 to 321 (MKNDNRIIKN…VYHQKQKIIR (321 aa)) is uridylyltransferase. A uridylyl-removing region spans residues 322-678 (LDDEFQLSNR…IMPHHSQGGT (357 aa)). Residues 440-562 (VDQHTLFVIR…LPHARYLDYL (123 aa)) enclose the HD domain. ACT domains lie at 679–760 (EVFI…AVSR) and 788–861 (QLFL…KSKY).

This sequence belongs to the GlnD family. The cofactor is Mg(2+).

The catalysed reaction is [protein-PII]-L-tyrosine + UTP = [protein-PII]-uridylyl-L-tyrosine + diphosphate. It catalyses the reaction [protein-PII]-uridylyl-L-tyrosine + H2O = [protein-PII]-L-tyrosine + UMP + H(+). Its activity is regulated as follows. Uridylyltransferase (UTase) activity is inhibited by glutamine, while glutamine activates uridylyl-removing (UR) activity. Its function is as follows. Modifies, by uridylylation and deuridylylation, the PII regulatory proteins (GlnB and homologs), in response to the nitrogen status of the cell that GlnD senses through the glutamine level. Under low glutamine levels, catalyzes the conversion of the PII proteins and UTP to PII-UMP and PPi, while under higher glutamine levels, GlnD hydrolyzes PII-UMP to PII and UMP (deuridylylation). Thus, controls uridylylation state and activity of the PII proteins, and plays an important role in the regulation of nitrogen assimilation and metabolism. In Legionella pneumophila (strain Paris), this protein is Bifunctional uridylyltransferase/uridylyl-removing enzyme.